Reading from the N-terminus, the 157-residue chain is Protein Smg (157 aa).

The protein belongs to the Smg family.

The protein is Protein Smg of Yersinia pseudotuberculosis serotype O:1b (strain IP 31758).